A 446-amino-acid chain; its full sequence is MREIVHIQAGQCGNQIGTKFWEVISDEHGIDPAGGYVGDSALQLERINVYYNESSSQKYVPRAALVDLEPGTMDSVRSGPFGQLFRPDNFIFGQTGAGNNWAKGHYTEGAELVDAVLDVVRKECEHCDCLQGFQLTHSLGGGTGSGMGTLLISKIREEFPDRIMNTFSVMPSPKVSDTVVEPYNATLSVHQLVENTDETYCIDNEALYDICFRTLKLTTPTYGDLNHLVSATMSGVTTSLRFPGQLNADLRKLAVNMVPFPRLHFFMPGFAPLTSRGSQQYRALTVPELTQQMFDARNMMAACDPRHGRYLTVATVFRGPMSMKEVDEQMLAIQSKNSSYFVEWIPNNVKVAVCDIPPRGLKMASTFIGNSTAIQELFKRISEQFSAMFRRKAFLHWFTGEGMDEMEFTEAESNMNDLVSEYQQYQDATANDGEEAFEDEEEEIDG.

Positions 1–4 match the MREI motif motif; that stretch reads MREI. Positions 11, 69, 138, 142, 143, and 144 each coordinate GTP. Glu69 provides a ligand contact to Mg(2+). Ser172 bears the Phosphoserine; by CDK1 mark. GTP contacts are provided by Asn204 and Asn226. At Glu438 the chain carries 5-glutamyl polyglutamate.

Belongs to the tubulin family. Dimer of alpha and beta chains. A typical microtubule is a hollow water-filled tube with an outer diameter of 25 nm and an inner diameter of 15 nM. Alpha-beta heterodimers associate head-to-tail to form protofilaments running lengthwise along the microtubule wall with the beta-tubulin subunit facing the microtubule plus end conferring a structural polarity. Microtubules usually have 13 protofilaments but different protofilament numbers can be found in some organisms and specialized cells. It depends on Mg(2+) as a cofactor. In terms of processing, some glutamate residues at the C-terminus are polyglutamylated, resulting in polyglutamate chains on the gamma-carboxyl group. Polyglutamylation plays a key role in microtubule severing by spastin (SPAST). SPAST preferentially recognizes and acts on microtubules decorated with short polyglutamate tails: severing activity by SPAST increases as the number of glutamates per tubulin rises from one to eight, but decreases beyond this glutamylation threshold. Glutamylation is also involved in cilia motility. Post-translationally, some glutamate residues at the C-terminus are monoglycylated but not polyglycylated due to the absence of functional TTLL10 in human. Monoglycylation is mainly limited to tubulin incorporated into cilia and flagella axonemes, which is required for their stability and maintenance. Flagella glycylation controls sperm motility. Both polyglutamylation and monoglycylation can coexist on the same protein on adjacent residues, and lowering glycylation levels increases polyglutamylation, and reciprocally. Phosphorylated on Ser-172 by CDK1 during the cell cycle, from metaphase to telophase, but not in interphase. This phosphorylation inhibits tubulin incorporation into microtubules. As to expression, ubiquitous. Maximal expression in breast and lung, where it represents around 10% of all beta-tubulins. Largely decreased expression in most cancerous tissues.

It is found in the cytoplasm. The protein localises to the cytoskeleton. Its function is as follows. Tubulin is the major constituent of microtubules, a cylinder consisting of laterally associated linear protofilaments composed of alpha- and beta-tubulin heterodimers. Microtubules grow by the addition of GTP-tubulin dimers to the microtubule end, where a stabilizing cap forms. Below the cap, tubulin dimers are in GDP-bound state, owing to GTPase activity of alpha-tubulin. The protein is Tubulin beta-6 chain (TUBB6) of Homo sapiens (Human).